The following is a 269-amino-acid chain: 3-deoxy-manno-octulosonate cytidylyltransferase (269 aa).

Belongs to the KdsB family.

It is found in the cytoplasm. The enzyme catalyses 3-deoxy-alpha-D-manno-oct-2-ulosonate + CTP = CMP-3-deoxy-beta-D-manno-octulosonate + diphosphate. The protein operates within nucleotide-sugar biosynthesis; CMP-3-deoxy-D-manno-octulosonate biosynthesis; CMP-3-deoxy-D-manno-octulosonate from 3-deoxy-D-manno-octulosonate and CTP: step 1/1. It functions in the pathway bacterial outer membrane biogenesis; lipopolysaccharide biosynthesis. Its function is as follows. Activates KDO (a required 8-carbon sugar) for incorporation into bacterial lipopolysaccharide in Gram-negative bacteria. The protein is 3-deoxy-manno-octulosonate cytidylyltransferase of Cupriavidus taiwanensis (strain DSM 17343 / BCRC 17206 / CCUG 44338 / CIP 107171 / LMG 19424 / R1) (Ralstonia taiwanensis (strain LMG 19424)).